We begin with the raw amino-acid sequence, 377 residues long: SLIDTGASRTWVFGSDCTSKSCGAHNTFGKEDSKTIKVTDEKWDVAYGTGKVAGVIVNDTMSFAGFELDTPFGSATTASDDFMSYPMDGILGIGPQDSKAKVPTVIQLLMQQKLLKSNIIGINLQRNSDGATDGQITFGDVDKSKFSGELAYSNVVSGGYQWEIAVDDIIVDGKPLNFQGRSGIVDTGTSFLLLPPDDADLIHSKIPKSAKSSVFYTVPCSTTTNIELSISGVKYAIKPKDYVGYESTTKGICNSLIIGRQAIGPKQWLLGDVFLKNVYSVYDFDKNRVGLAARKYGETKDPPSSSHPPPAPTSNKASGGSPGLPEQSGTSSATTSTTGEPSSGSTASPSAASSVSMSAWLSLAVFLSTASSLILWD.

The Peptidase A1 domain maps to 1-292; that stretch reads SLIDTGASRT…DFDKNRVGLA (292 aa). Asp4 is a catalytic residue. N-linked (GlcNAc...) asparagine glycosylation occurs at Asn58. Residue Asp186 is part of the active site. Positions 296-351 are disordered; it reads YGETKDPPSSSHPPPAPTSNKASGGSPGLPEQSGTSSATTSTTGEPSSGSTASPSA. The segment covering 328–351 has biased composition (low complexity); the sequence is SGTSSATTSTTGEPSSGSTASPSA. Ser350 carries the GPI-anchor amidated serine lipid modification. The propeptide at 351 to 377 is removed in mature form; sequence AASSVSMSAWLSLAVFLSTASSLILWD.

It belongs to the peptidase A1 family.

It is found in the cell membrane. In terms of biological role, secreted aspartic-type endopeptidase which is secreted and contributes to virulence. This chain is Probable aspartic-type endopeptidase CTSD (CTSD), found in Arthroderma otae (strain ATCC MYA-4605 / CBS 113480) (Microsporum canis).